Consider the following 267-residue polypeptide: Outer membrane protein assembly factor BamD (267 aa).

The N-terminal stretch at 1-16 (MKKILLTVSLGLALSA) is a signal peptide. Cysteine 17 is lipidated: N-palmitoyl cysteine. A lipid anchor (S-diacylglycerol cysteine) is attached at cysteine 17.

Belongs to the BamD family. As to quaternary structure, part of the Bam complex.

It is found in the cell outer membrane. In terms of biological role, part of the outer membrane protein assembly complex, which is involved in assembly and insertion of beta-barrel proteins into the outer membrane. Required for efficient transformation of Neisseria meningitidis by species-related DNA. This Neisseria meningitidis serogroup B (strain ATCC BAA-335 / MC58) protein is Outer membrane protein assembly factor BamD.